A 1178-amino-acid chain; its full sequence is Mitosis inhibitor protein kinase SWE1 (1178 aa).

The span at 1–35 (MDSNPCQDVSGDTSSTPMANNNPTNDSTISSQNHS) shows a compositional bias: polar residues. Disordered stretches follow at residues 1-61 (MDSN…HSQQ), 188-209 (NSQI…SSSM), 288-336 (SNNQ…SKGF), 378-434 (PTHT…SSNI), 451-473 (NHAR…TNIS), 524-543 (KNSI…PIKR), 584-606 (QRFP…QHHD), and 721-754 (KREI…GDDP). Residues 37–55 (IGLRKHQQQHYHQHSHSQM) are compositionally biased toward basic residues. The span at 299-308 (VSQSPSPSSK) shows a compositional bias: polar residues. Low complexity predominate over residues 388–413 (SSLNPPSSSTSNSTTAAITSTSPPAN). A compositionally biased stretch (low complexity) spans 591 to 601 (NPNTTTNNNNT). Residues 791 to 1154 (MKNIKYIGSG…ACNILEMPEC (364 aa)) enclose the Protein kinase domain. ATP is bound by residues 797–805 (IGSGAFSIA) and lysine 818. Residue aspartate 929 is the Proton acceptor of the active site. The Mg(2+) site is built by asparagine 934 and aspartate 947. The interval 1034–1068 (HNPNTNSNISGSGSRSGSGSTGGNGSAGDGSTNST) is disordered. The segment covering 1037-1046 (NTNSNISGSG) has biased composition (low complexity). Over residues 1047-1061 (SRSGSGSTGGNGSAG) the composition is skewed to gly residues.

It belongs to the protein kinase superfamily. Ser/Thr protein kinase family. WEE1 subfamily. Post-translationally, phosphorylated.

It is found in the bud neck. The protein resides in the nucleus. The enzyme catalyses L-seryl-[protein] + ATP = O-phospho-L-seryl-[protein] + ADP + H(+). The catalysed reaction is L-threonyl-[protein] + ATP = O-phospho-L-threonyl-[protein] + ADP + H(+). Protein kinase that acts as a negative regulator of entry into mitosis (G2 to M transition) by phosphorylating and inhibiting the mitosis-promoting cyclin B-bound CDC28 at 'Tyr-18'. SWE1-mediated inhibition of CDC28 acts in a cell size or morphogenesis checkpoint to delay mitosis in response to defects in growth, actin organization or bud formation. Plays an important role in filamentous growth. The chain is Mitosis inhibitor protein kinase SWE1 (SWE1) from Candida albicans (strain SC5314 / ATCC MYA-2876) (Yeast).